The following is a 397-amino-acid chain: Lysophospholipid transporter LplT (397 aa).

Residues 1 to 17 (MSESVHTNTSLWSKGMK) lie on the Periplasmic side of the membrane. A helical membrane pass occupies residues 18 to 38 (AVIVAQFLSAFGDNALLFATL). Topologically, residues 39-52 (ALLKAQFYPEWSQP) are cytoplasmic. A helical transmembrane segment spans residues 53–73 (ILQMVFVGAYILFAPFVGQVA). Residues 74–90 (DSFAKGRVMMFANGLKL) lie on the Periplasmic side of the membrane. The chain crosses the membrane as a helical span at residues 91–111 (LGAASICFGINPFLGYTLVGV). At 112 to 144 (GAAAYSPAKYGILGELTTGSKLVKANGLMEAST) the chain is on the cytoplasmic side. Residues 145–165 (IAAILLGSVAGGVLADWHVLV) traverse the membrane as a helical segment. Position 166 (Ala166) is a topological domain, periplasmic. Residues 167–187 (LAACALAYGGAVVANIYIPKL) form a helical membrane-spanning segment. Topologically, residues 188-226 (AAARPGQSWNLINMTRSFLNACTSLWRNGETRFSLVGTS) are cytoplasmic. A helical membrane pass occupies residues 227-247 (LFWGAGVTLRFLLVLWVPVAL). Over 248–256 (GITDNATPT) the chain is Periplasmic. Residues 257–277 (YLNAMVAIGIVVGAGAAAKLV) traverse the membrane as a helical segment. Topologically, residues 278–280 (TLE) are cytoplasmic. The chain crosses the membrane as a helical span at residues 281–301 (TVSRCMPAGILIGVVVLIFSL). The Periplasmic portion of the chain corresponds to 302–304 (QHE). A helical transmembrane segment spans residues 305-325 (LLPAYALLMLIGVLGGFFVVP). Residues 326 to 343 (LNALLQERGKKSVGAGNA) lie on the Cytoplasmic side of the membrane. A helical transmembrane segment spans residues 344 to 364 (IAVQNLGENSAMLLMLGIYSL). At 365-366 (AV) the chain is on the periplasmic side. Residues 367 to 387 (MVGIPVVPIGIGFGTLFALAI) traverse the membrane as a helical segment. The Cytoplasmic portion of the chain corresponds to 388–397 (TALWIWQRRH).

The protein belongs to the major facilitator superfamily. LplT (TC 2.A.1.42) family.

The protein localises to the cell inner membrane. Its function is as follows. Catalyzes the facilitated diffusion of 2-acyl-glycero-3-phosphoethanolamine (2-acyl-GPE) into the cell. The chain is Lysophospholipid transporter LplT from Escherichia coli O9:H4 (strain HS).